The following is a 737-amino-acid chain: FYVE, RhoGEF and PH domain-containing protein 3 (737 aa).

The segment at 1–151 is disordered; it reads MESGGGSSTP…KADKDAGLAQ (151 aa). The segment covering 126-136 has biased composition (acidic residues); it reads ADSDVGEEPDS. Serine 128 carries the post-translational modification Phosphoserine. Residues 157 to 341 enclose the DH domain; it reads KLLHIAQELL…STAANHSNAA (185 aa). In terms of domain architecture, PH 1 spans 370-469; sequence ELIKEGQIQK…WIQIIQATIE (100 aa). Positions 487–533 are disordered; that stretch reads QDEDPSLSPDMPITSTSPVEPVVTTEGGSGAAGLEPRKLSSKTRRDK. The span at 500–512 shows a compositional bias: low complexity; that stretch reads TSTSPVEPVVTTE. A compositionally biased stretch (basic and acidic residues) spans 521–533; the sequence is EPRKLSSKTRRDK. An FYVE-type zinc finger spans residues 532–588; the sequence is DKEKQSCKSCGETFNSITKRRHHCKLCGVVICGKCSEFKAENSRQSRVCRECFLTQP. Positions 538, 541, 555, 558, 563, 566, 580, and 583 each coordinate Zn(2+). Disordered stretches follow at residues 589–620 and 713–737; these read VAPE…SLLC and AARG…AAAP. Positions 616–715 constitute a PH 2 domain; that stretch reads PSLLCGPLRL…WLETLSTAAR (100 aa).

Its subcellular location is the cytoplasm. The protein resides in the cytoskeleton. In terms of biological role, promotes the formation of filopodia. May activate CDC42, a member of the Ras-like family of Rho- and Rac proteins, by exchanging bound GDP for free GTP. Plays a role in regulating the actin cytoskeleton and cell shape. In Pongo abelii (Sumatran orangutan), this protein is FYVE, RhoGEF and PH domain-containing protein 3 (FGD3).